The chain runs to 305 residues: HPr kinase/phosphorylase (305 aa).

Residues His-138 and Lys-159 contribute to the active site. Residue 153 to 160 (GESGIGKS) participates in ATP binding. Ser-160 lines the Mg(2+) pocket. Asp-177 acts as the Proton acceptor; for phosphorylation activity. Proton donor; for dephosphorylation activity in catalysis. Positions 201-210 (IEIRGIGILD) are important for the catalytic mechanism of both phosphorylation and dephosphorylation. Position 202 (Glu-202) interacts with Mg(2+). The active site involves Arg-243. The important for the catalytic mechanism of dephosphorylation stretch occupies residues 264–269 (PVRPGR).

The protein belongs to the HPrK/P family. Homohexamer. Mg(2+) serves as cofactor.

The catalysed reaction is [HPr protein]-L-serine + ATP = [HPr protein]-O-phospho-L-serine + ADP + H(+). It catalyses the reaction [HPr protein]-O-phospho-L-serine + phosphate + H(+) = [HPr protein]-L-serine + diphosphate. In terms of biological role, catalyzes the ATP- as well as the pyrophosphate-dependent phosphorylation of a specific serine residue in HPr, a phosphocarrier protein of the phosphoenolpyruvate-dependent sugar phosphotransferase system (PTS). HprK/P also catalyzes the pyrophosphate-producing, inorganic phosphate-dependent dephosphorylation (phosphorolysis) of seryl-phosphorylated HPr (P-Ser-HPr). The two antagonistic activities of HprK/P are regulated by several intracellular metabolites, which change their concentration in response to the absence or presence of rapidly metabolisable carbon sources (glucose, fructose, etc.) in the growth medium. Therefore, by controlling the phosphorylation state of HPr, HPrK/P is a sensor enzyme that plays a major role in the regulation of carbon metabolism and sugar transport: it mediates carbon catabolite repression (CCR), and regulates PTS-catalyzed carbohydrate uptake and inducer exclusion. The chain is HPr kinase/phosphorylase from Thermoanaerobacter pseudethanolicus (strain ATCC 33223 / 39E) (Clostridium thermohydrosulfuricum).